Consider the following 523-residue polypeptide: GMP synthase [glutamine-hydrolyzing] (523 aa).

The 198-residue stretch at 8–205 (KILILDFGSQ…VVNICGCETK (198 aa)) folds into the Glutamine amidotransferase type-1 domain. The Nucleophile role is filled by Cys85. Residues His179 and Glu181 contribute to the active site. Residues 206 to 398 (WTAENIIEDA…LGLPAEMINR (193 aa)) form the GMPS ATP-PPase domain. ATP is bound at residue 233–239 (SGGVDSS).

In terms of assembly, homodimer.

It catalyses the reaction XMP + L-glutamine + ATP + H2O = GMP + L-glutamate + AMP + diphosphate + 2 H(+). The protein operates within purine metabolism; GMP biosynthesis; GMP from XMP (L-Gln route): step 1/1. Its function is as follows. Catalyzes the synthesis of GMP from XMP. The sequence is that of GMP synthase [glutamine-hydrolyzing] (guaA) from Haemophilus influenzae (strain ATCC 51907 / DSM 11121 / KW20 / Rd).